Consider the following 548-residue polypeptide: Membrane protein insertase YidC (548 aa).

A helical membrane pass occupies residues 6 to 26 (NLLVIALLFVSFMIWQAWEQD). The segment at 28 to 56 (NPQPQTQQTTQTTTTAAGSAADQGVPASG) is disordered. Low complexity predominate over residues 29–42 (PQPQTQQTTQTTTT). 4 consecutive transmembrane segments (helical) span residues 350-370 (FVGN…GIMY), 424-444 (FPLI…MGSI), 458-478 (LSAQ…MFFI), and 499-519 (PVIF…YYIV).

The protein belongs to the OXA1/ALB3/YidC family. Type 1 subfamily. Interacts with the Sec translocase complex via SecD. Specifically interacts with transmembrane segments of nascent integral membrane proteins during membrane integration.

It localises to the cell inner membrane. Required for the insertion and/or proper folding and/or complex formation of integral membrane proteins into the membrane. Involved in integration of membrane proteins that insert both dependently and independently of the Sec translocase complex, as well as at least some lipoproteins. Aids folding of multispanning membrane proteins. The protein is Membrane protein insertase YidC of Salmonella newport (strain SL254).